The primary structure comprises 149 residues: MFKNPAERPRKLHELSSALEIPYDELRLNCVYCKGQLTETEVLDFAFTDLTIVYRDDTPHGVCTKCLRFYSKVSEFRWYRYSVYGTTLEKLTNKGICDLLIRCITCQRPLCPEEKQRHLDKKKRFHNIGGRWTGRCIACWRRPRTETQV.

Zinc fingers lie at residues 30–66 and 103–139; these read CVYC…CTKC and CITC…CIAC. The PDZ-binding domain signature appears at 147-149; that stretch reads TQV.

It belongs to the papillomaviridae E6 protein family. In terms of assembly, forms homodimers. Interacts with ubiquitin-protein ligase UBE3A/E6-AP and thus forms a complex with human TP53. Interacts with human NFX1 and MAGI3. Interacts with human IRF3; this interaction inhibits the establishment of antiviral state. Interacts with human TYK2; this interaction inhibits JAK-STAT activation by interferon alpha. Interacts with host DLG1; this interaction leads to the proteasomal degradation of DLG1.

Its subcellular location is the host cytoplasm. It localises to the host nucleus. Its function is as follows. Plays a major role in the induction and maintenance of cellular transformation. Acts mainly as an oncoprotein by stimulating the destruction of many host cell key regulatory proteins. E6 associates with host UBE3A/E6-AP ubiquitin-protein ligase, and inactivates tumor suppressors TP53 and TP73 by targeting them to the 26S proteasome for degradation. In turn, DNA damage and chromosomal instabilities increase and lead to cell proliferation and cancer development. The complex E6/E6AP targets several other substrates to degradation via the proteasome including host DLG1 or NFX1, a repressor of human telomerase reverse transcriptase (hTERT). The resulting increased expression of hTERT prevents the shortening of telomere length leading to cell immortalization. Other cellular targets including BAK1, Fas-associated death domain-containing protein (FADD) and procaspase 8, are degraded by E6/E6AP causing inhibition of apoptosis. E6 also inhibits immune response by interacting with host IRF3 and TYK2. These interactions prevent IRF3 transcriptional activities and inhibit TYK2-mediated JAK-STAT activation by interferon alpha resulting in inhibition of the interferon signaling pathway. The sequence is that of Protein E6 from Human papillomavirus 31.